A 258-amino-acid polypeptide reads, in one-letter code: UPF0246 protein Asuc_0575 (258 aa).

This sequence belongs to the UPF0246 family.

The chain is UPF0246 protein Asuc_0575 from Actinobacillus succinogenes (strain ATCC 55618 / DSM 22257 / CCUG 43843 / 130Z).